The following is a 671-amino-acid chain: NADH-quinone oxidoreductase subunit G (671 aa).

The 78-residue stretch at 1–78 folds into the 2Fe-2S ferredoxin-type domain; it reads MIKLNVDGSE…GMVIHTDTPM (78 aa). [2Fe-2S] cluster is bound by residues C34, C45, C48, and C62. Positions 78–117 constitute a 4Fe-4S His(Cys)3-ligated-type domain; sequence MVKKAREGVMEFLLINHPLDCPICDQGGECNLQDQAFRYG. Residues H94, C98, C101, C107, C146, C149, C152, and C196 each contribute to the [4Fe-4S] cluster site. The region spanning 215 to 271 is the 4Fe-4S Mo/W bis-MGD-type domain; sequence LKHTASIGVHDAEGSNIRIDSRGDEVMRILPRVNEEINEEWLSDKNRFSYDGLKYQR.

This sequence belongs to the complex I 75 kDa subunit family. Requires [2Fe-2S] cluster as cofactor. [4Fe-4S] cluster serves as cofactor.

The catalysed reaction is a quinone + NADH + 5 H(+)(in) = a quinol + NAD(+) + 4 H(+)(out). Its function is as follows. NDH-1 shuttles electrons from NADH, via FMN and iron-sulfur (Fe-S) centers, to quinones in the respiratory chain. Couples the redox reaction to proton translocation (for every two electrons transferred, four hydrogen ions are translocated across the cytoplasmic membrane), and thus conserves the redox energy in a proton gradient. This chain is NADH-quinone oxidoreductase subunit G (nuoG), found in Rickettsia conorii (strain ATCC VR-613 / Malish 7).